The chain runs to 359 residues: Guanine nucleotide-binding protein alpha-4 subunit (359 aa).

Glycine 2 is lipidated: N-myristoyl glycine. The S-palmitoyl cysteine moiety is linked to residue cysteine 3. The region spanning 31-359 (GEIKLLLLGA…RNNLYLCGLY (329 aa)) is the G-alpha domain. Positions 34-47 (KLLLLGAGESGKST) are G1 motif. GTP contacts are provided by residues 39–46 (GAGESGKS), 178–184 (LRARVKS), 203–207 (DVGGQ), 272–275 (NKMD), and alanine 331. Serine 46 lines the Mg(2+) pocket. The segment at 176 to 184 (DILRARVKS) is G2 motif. Residues 199–208 (FKMFDVGGQR) are G3 motif. The G4 motif stretch occupies residues 268 to 275 (ILFLNKMD). The G5 motif stretch occupies residues 329–334 (TCATDT).

It belongs to the G-alpha family. G(i/o/t/z) subfamily. As to quaternary structure, g proteins are composed of 3 units; alpha, beta and gamma. The alpha chain contains the guanine nucleotide binding site. In terms of tissue distribution, expressed in ASI neurons.

Its function is as follows. Guanine nucleotide-binding proteins (G proteins) are involved as modulators or transducers in various transmembrane signaling systems. Acts in concert with npr-15 to activate TGF-beta-like daf-7 secretion in the ASI neuron, thereby promoting larval development and inhibition of dauer diapause. The protein is Guanine nucleotide-binding protein alpha-4 subunit (gpa-4) of Caenorhabditis elegans.